Here is a 97-residue protein sequence, read N- to C-terminus: Peptide YY-A (97 aa).

A signal peptide spans 1–28 (MAVMLKPWTVVATVLICVLLCLGTFVDA). The residue at position 64 (Tyr64) is a Tyrosine amide. Residues 68-97 (STSEDVMAELLFGDDTEHKQRSRYDDSFMW) constitute a propeptide, C-terminal extension.

Belongs to the NPY family. In terms of tissue distribution, mainly expressed in brainstem neurons, and in the telencephalon. Also expressed in intestinal endocrine cells.

Its subcellular location is the secreted. This chain is Peptide YY-A (pyya), found in Danio rerio (Zebrafish).